Consider the following 152-residue polypeptide: Lipoprotein signal peptidase (152 aa).

A run of 3 helical transmembrane segments spans residues Val-33–Leu-53, Met-58–Ile-78, and Pro-83–Asp-102. Active-site residues include Asp-111 and Asp-125. The helical transmembrane segment at Val-120–Leu-140 threads the bilayer.

It belongs to the peptidase A8 family.

Its subcellular location is the cell membrane. The enzyme catalyses Release of signal peptides from bacterial membrane prolipoproteins. Hydrolyzes -Xaa-Yaa-Zaa-|-(S,diacylglyceryl)Cys-, in which Xaa is hydrophobic (preferably Leu), and Yaa (Ala or Ser) and Zaa (Gly or Ala) have small, neutral side chains.. Its pathway is protein modification; lipoprotein biosynthesis (signal peptide cleavage). Its function is as follows. This protein specifically catalyzes the removal of signal peptides from prolipoproteins. The sequence is that of Lipoprotein signal peptidase from Pelotomaculum thermopropionicum (strain DSM 13744 / JCM 10971 / SI).